A 459-amino-acid chain; its full sequence is Septin-4 (459 aa).

Phosphoserine is present on residues Ser10, Ser49, Ser98, and Ser99. 2 disordered regions span residues 18–52 (FVKDFPGSEPCHPTESKTRVARPQILEPRPQSPDL) and 70–98 (SQQYFCPPAPLSPSSRPRSPWGKLDPYDS). The Septin-type G domain occupies 122 to 395 (KGFDFTLMVA…ENYRAQCIQS (274 aa)). The tract at residues 132 to 139 (GESGLGKS) is G1 motif. Residues 132-139 (GESGLGKS) and Thr166 contribute to the GTP site. The tract at residues 189–192 (DTPG) is G3 motif. Residues 270–273 (AKAD) are G4 motif. A GTP-binding site is contributed by 271 to 279 (KADTLTPSE). A Phosphoserine modification is found at Ser306. Gly329 and Arg344 together coordinate GTP. Positions 410-430 (TRESGTDFPIPAVPPGTDPET) are disordered. Ser413 is subject to Phosphoserine. A Phosphothreonine modification is found at Thr415. Residues 434 to 459 (IREKDEELRRMQEMLHKIQRQMKETH) are a coiled coil.

This sequence belongs to the TRAFAC class TrmE-Era-EngA-EngB-Septin-like GTPase superfamily. Septin GTPase family. In terms of assembly, septins polymerize into heterooligomeric protein complexes that form filaments, and can associate with cellular membranes, actin filaments and microtubules. GTPase activity is required for filament formation. Interacts with SEPTIN8. Component of a septin core octameric complex consisting of SEPTIN12, SEPTIN7, SEPTIN6 and SEPTIN2 or SEPTIN4 in the order 12-7-6-2-2-6-7-12 or 12-7-6-4-4-6-7-12. Interacts with SEPTIN14 (via C-terminus). Interacts with DYRK1A. Interacts with SLC6A3/DAT and SNCA/alpha-synuclein. Interacts with STX1A; in the striatum. Interacts with XIAP (via BIR3 domain) following the induction of apoptosis. Interacts with AREL1 (via HECT domain); in the cytoplasm following induction of apoptosis. Post-translationally, phosphorylated by DYRK1A.

Its subcellular location is the cytoplasm. The protein localises to the cell projection. The protein resides in the cilium. It is found in the flagellum. It localises to the cytoplasmic vesicle. Its subcellular location is the secretory vesicle. The protein localises to the axon. The protein resides in the dendrite. It is found in the perikaryon. Functionally, filament-forming cytoskeletal GTPase. Pro-apoptotic protein involved in LGR5-positive intestinal stem cell and Paneth cell expansion in the intestines, via its interaction with XIAP. May also play a role in the regulation of cell fate in the intestine. Positive regulator of apoptosis involved in hematopoietic stem cell homeostasis; via its interaction with XIAP. Negative regulator of repair and hair follicle regeneration in response to injury, due to inhibition of hair follicle stem cell proliferation, potentially via its interaction with XIAP. Plays an important role in male fertility and sperm motility. During spermiogenesis, essential for the establishment of the annulus (a fibrous ring structure connecting the midpiece and the principal piece of the sperm flagellum) which is a requisite for the structural and mechanical integrity of the sperm. Involved in the migration of cortical neurons and the formation of neuron leading processes during embryonic development. Required for dopaminergic metabolism in presynaptic autoreceptors; potentially via activity as a presynaptic scaffold protein. In Rattus norvegicus (Rat), this protein is Septin-4.